Reading from the N-terminus, the 44-residue chain is Photosystem II reaction center protein J (44 aa).

A helical membrane pass occupies residues 12 to 32; sequence IPLWIVGFVVGSLALGLLGIL.

Belongs to the PsbJ family. As to quaternary structure, PSII is composed of 1 copy each of membrane proteins PsbA, PsbB, PsbC, PsbD, PsbE, PsbF, PsbH, PsbI, PsbJ, PsbK, PsbL, PsbM, PsbT, PsbY, PsbZ, Psb30/Ycf12, at least 3 peripheral proteins of the oxygen-evolving complex and a large number of cofactors. It forms dimeric complexes.

It localises to the plastid. The protein localises to the chloroplast thylakoid membrane. In terms of biological role, one of the components of the core complex of photosystem II (PSII). PSII is a light-driven water:plastoquinone oxidoreductase that uses light energy to abstract electrons from H(2)O, generating O(2) and a proton gradient subsequently used for ATP formation. It consists of a core antenna complex that captures photons, and an electron transfer chain that converts photonic excitation into a charge separation. The chain is Photosystem II reaction center protein J from Bigelowiella natans (Pedinomonas minutissima).